The sequence spans 526 residues: Organic cation/carnitine transporter 4 (526 aa).

The Cytoplasmic portion of the chain corresponds to 1-52 (MESPEDRNGNDVRQPLLEKIPVKKEAEGEERLCIDEMLQRYCGEFGRWQLKH). Residues 53–73 (FVLTCIAWALEAFHTMVMIFA) form a helical membrane-spanning segment. At 74–123 (DQEPEWRCVGSDCRVGSLNCELDPSSWEWTAGKGSSTVSEWGLICGDKYK) the chain is on the extracellular side. A helical membrane pass occupies residues 124 to 144 (VGLVQALFFAGCMIGAGVFGH). Topologically, residues 145 to 153 (LSDSKLGRK) are cytoplasmic. The chain crosses the membrane as a helical span at residues 154 to 174 (GSLTVVCIINAIFGIATAFSP). Over 175–179 (NYWTY) the chain is Extracellular. Residues 180 to 200 (VVLRFLTGFSTGGVGLTAFVL) traverse the membrane as a helical segment. ATP is bound at residue 201–208 (ATEPIGPS). Topologically, residues 201 to 214 (ATEPIGPSKRGVAG) are cytoplasmic. A helical membrane pass occupies residues 215–235 (MSTFYFFSAGIAVLSGIAYVF). The Extracellular portion of the chain corresponds to 236–240 (RSWRE). The helical transmembrane segment at 241-261 (LFIVSSLPSLLFLLIVIPFIS) threads the bilayer. Residues 262–331 (ESPRWYLVRG…ILSPLMRMRL (70 aa)) lie on the Cytoplasmic side of the membrane. Residues 332–352 (VISVAISFTVSIVYYGLSLNV) form a helical membrane-spanning segment. Residues 353–360 (GNLKTNLY) are Extracellular-facing. Residues 361–381 (LNVFVNAVSEMPAFAITAVLL) traverse the membrane as a helical segment. The Cytoplasmic portion of the chain corresponds to 382 to 390 (DKYGRKPLS). The helical transmembrane segment at 391-411 (IGTQWFSCVFCLVGFSVWGAG) threads the bilayer. Over 412–418 (PWKSVRM) the chain is Extracellular. Residues 419–439 (VSGVLGIFGMAGTYNLLFIYI) traverse the membrane as a helical segment. At 440-451 (AELFPTVVRNAA) the chain is on the cytoplasmic side. Residues 452–472 (LGCATQAAQMGAILAPFVVVL) traverse the membrane as a helical segment. The Extracellular portion of the chain corresponds to 473-475 (GEE). Residues 476 to 496 (LPFGVFAVCGLVGGGLAFYLP) form a helical membrane-spanning segment. The Cytoplasmic segment spans residues 497 to 526 (ETLNKPLYDTMFGMHEAESESNRERGEVIC).

Belongs to the major facilitator (TC 2.A.1) superfamily. Organic cation transporter (TC 2.A.1.19) family. In terms of tissue distribution, mostly expressed in siliques, and, to a lower extent, in stems, leaves, flowers and siliques. Present in pollen. In the stems of secondary inflorescences present in the phloem cells and xylem parenchyma cells.

It localises to the vacuole membrane. In terms of biological role, high affinity carnitine transporter involved in the active cellular uptake of carnitine. Also transports organic cations. The polypeptide is Organic cation/carnitine transporter 4 (OCT4) (Arabidopsis thaliana (Mouse-ear cress)).